A 90-amino-acid polypeptide reads, in one-letter code: Molybdopterin synthase sulfur carrier subunit (90 aa).

Gly90 is modified (1-thioglycine; alternate). A Glycyl adenylate; alternate modification is found at Gly90.

Belongs to the MoaD family. MOCS2A subfamily. In terms of assembly, heterotetramer; composed of 2 small (Mocs2A) and 2 large (Mocs2B) subunits. C-terminal thiocarboxylation occurs in 2 steps, it is first acyl-adenylated (-COAMP) via the hesA/moeB/thiF part of MOCS3, then thiocarboxylated (-COSH) via the rhodanese domain of MOCS3.

The protein localises to the cytoplasm. The protein operates within cofactor biosynthesis; molybdopterin biosynthesis. Its function is as follows. Acts as a sulfur carrier required for molybdopterin biosynthesis. Component of the molybdopterin synthase complex that catalyzes the conversion of precursor Z into molybdopterin by mediating the incorporation of 2 sulfur atoms into precursor Z to generate a dithiolene group. In the complex, serves as sulfur donor by being thiocarboxylated (-COSH) at its C-terminus by MOCS3. After interaction with Mocs2B, the sulfur is then transferred to precursor Z to form molybdopterin. Involved during biosynthesis of the molybdenum cofactor. This chain is Molybdopterin synthase sulfur carrier subunit, found in Drosophila melanogaster (Fruit fly).